Consider the following 511-residue polypeptide: MMKMRWLSAAVMLTLYTSSSWAFSIDDVAKQAQSLAGKGYEAPKSNLPSVFRDMKYADYQQIQFNHDKAYWNNLKTPFKLEFYHQGMYFDTPVKINEVTATAVKRIKYSPDYFTFGDVQHDKDTVKDLGFAGFKVLYPINSKDKNDEIVSMLGASYFRVIGAGQVYGLSARGLAIDTALPSGEEFPRFKEFWIERPKPTDKRLTIYALLDSPRATGAYKFVVMPGRDTVVDVQSKIYLRDKVGKLGVAPLTSMFLFGPNQPSPANNYRPELHDSNGLSIHAGNGEWIWRPLNNPKHLAVSSFSMENPQGFGLLQRGRDFSRFEDLDDRYDLRPSAWVTPKGEWGKGSVELVEIPTNDETNDNIVAYWTPDQLPEPGKEMNFKYTITFSRDEDKLHAPDNAWVQQTRRSTGDVKQSNLIRQPDGTIAFVVDFTGAEMKKLPEDTPVTAQTSIGDNGEIVESTVRYNPVTKGWRLVMRVKVKDAKKTTEMRAALVNADQTLSETWSYQLPANE.

The first 22 residues, 1 to 22, serve as a signal peptide directing secretion; sequence MMKMRWLSAAVMLTLYTSSSWA.

It belongs to the OpgD/OpgG family.

The protein resides in the periplasm. The protein operates within glycan metabolism; osmoregulated periplasmic glucan (OPG) biosynthesis. In terms of biological role, involved in the biosynthesis of osmoregulated periplasmic glucans (OPGs). In Escherichia coli O81 (strain ED1a), this protein is Glucans biosynthesis protein G.